Reading from the N-terminus, the 1217-residue chain is Valine--tRNA ligase (1217 aa).

The GST C-terminal domain occupies 27–155 (NAKQQSQVWQ…ISLCEKMVPV (129 aa)). The 'HIGH' region motif lies at 293 to 303 (PNVTGSLHLGH). The 'KMSKS' region motif lies at 809–813 (KMSKS). Lys812 provides a ligand contact to ATP.

Belongs to the class-I aminoacyl-tRNA synthetase family.

It carries out the reaction tRNA(Val) + L-valine + ATP = L-valyl-tRNA(Val) + AMP + diphosphate. The polypeptide is Valine--tRNA ligase (vars1) (Takifugu rubripes (Japanese pufferfish)).